Reading from the N-terminus, the 155-residue chain is MNPLRKKRLLIIAALLAGVGLAMTLALGALKENINLFYTPSQIANGEAPLDTRIRAGGMVEKGSLQRSADSLDVRFVVTDFNKSVTITYRGILPDLFREGQGIVALGKLNAQGVVVADEVLAKHDEKYMPPEVTKALRDSGQAAPGGSSTPAKQG.

Topologically, residues Met-1 to Arg-8 are cytoplasmic. A helical; Signal-anchor for type II membrane protein transmembrane segment spans residues Leu-9–Ala-29. Over Leu-30–Gly-155 the chain is Periplasmic. Residues His-124 and Tyr-128 each coordinate heme. The interval Thr-134–Gly-155 is disordered.

It belongs to the CcmE/CycJ family.

It is found in the cell inner membrane. In terms of biological role, heme chaperone required for the biogenesis of c-type cytochromes. Transiently binds heme delivered by CcmC and transfers the heme to apo-cytochromes in a process facilitated by CcmF and CcmH. The protein is Cytochrome c-type biogenesis protein CcmE of Pseudomonas savastanoi pv. phaseolicola (strain 1448A / Race 6) (Pseudomonas syringae pv. phaseolicola (strain 1448A / Race 6)).